The chain runs to 355 residues: MNIAALLSGGVDSSVVVHLLCEQGYKPTLFYIKIGMDGAEYMDCSAEEDIEMSTAIARKYGLSLEVVDLHKEYWENVAAYAIDKIKKGLTPNPDVMCNKLIKFGCFEQQVGKNFDFTATGHYATTIRQDGKTWLGTAKDPVKDQTDFLAQIDYLQVSKLMFPIGGLMKQEVREIASRAGLPSARRKDSQGICFLGKINYNDFVRRFLGEREGAIIELETGKKVGTHRGYWFHTIGQRKGLGLSGGPWFVIKKDVEENIIYVSHGYGVETQFGSEFRINDFHFITENPWKDAGKEIDITFKIRHTPEFTKGKLVQEEGGQFRILSSEKLQGIAPGQFGVIYDEEAGICVGSGEITR.

An ATP-binding site is contributed by 6–13 (LLSGGVDS). Residues 92 to 94 (NPD) form an interaction with target base in tRNA region. Cys-97 serves as the catalytic Nucleophile. The cysteines at positions 97 and 192 are disulfide-linked. Gly-120 is a binding site for ATP. Residues 142–144 (KDQ) are interaction with tRNA. Cys-192 functions as the Cysteine persulfide intermediate in the catalytic mechanism.

Belongs to the MnmA/TRMU family.

Its subcellular location is the cytoplasm. The catalysed reaction is S-sulfanyl-L-cysteinyl-[protein] + uridine(34) in tRNA + AH2 + ATP = 2-thiouridine(34) in tRNA + L-cysteinyl-[protein] + A + AMP + diphosphate + H(+). In terms of biological role, catalyzes the 2-thiolation of uridine at the wobble position (U34) of tRNA, leading to the formation of s(2)U34. The protein is tRNA-specific 2-thiouridylase MnmA 1 of Bacteroides thetaiotaomicron (strain ATCC 29148 / DSM 2079 / JCM 5827 / CCUG 10774 / NCTC 10582 / VPI-5482 / E50).